Consider the following 317-residue polypeptide: Sulfate adenylyltransferase subunit 2 (317 aa).

Residues 1–10 (MSNAVHETDS) are compositionally biased toward basic and acidic residues. Disordered regions lie at residues 1 to 21 (MSNAVHETDSKNTVASKPPLD) and 298 to 317 (RAIDRDQSGSMEKKKREGYF).

It belongs to the PAPS reductase family. CysD subfamily. As to quaternary structure, heterodimer composed of CysD, the smaller subunit, and CysN.

The enzyme catalyses sulfate + ATP + H(+) = adenosine 5'-phosphosulfate + diphosphate. It participates in sulfur metabolism; hydrogen sulfide biosynthesis; sulfite from sulfate: step 1/3. With CysN forms the ATP sulfurylase (ATPS) that catalyzes the adenylation of sulfate producing adenosine 5'-phosphosulfate (APS) and diphosphate, the first enzymatic step in sulfur assimilation pathway. APS synthesis involves the formation of a high-energy phosphoric-sulfuric acid anhydride bond driven by GTP hydrolysis by CysN coupled to ATP hydrolysis by CysD. The polypeptide is Sulfate adenylyltransferase subunit 2 (Agrobacterium fabrum (strain C58 / ATCC 33970) (Agrobacterium tumefaciens (strain C58))).